Consider the following 504-residue polypeptide: Probable alpha-L-arabinofuranosidase C (504 aa).

N-linked (GlcNAc...) asparagine glycosylation is found at Asn152, Asn181, and Asn269.

The protein belongs to the glycosyl hydrolase 51 family.

It is found in the secreted. It catalyses the reaction Hydrolysis of terminal non-reducing alpha-L-arabinofuranoside residues in alpha-L-arabinosides.. It functions in the pathway glycan metabolism; L-arabinan degradation. Functionally, alpha-L-arabinofuranosidase involved in the degradation of arabinoxylan, a major component of plant hemicellulose. Acts only on small linear 1,5-alpha-linked L-arabinofuranosyl oligosaccharides. In Aspergillus flavus (strain ATCC 200026 / FGSC A1120 / IAM 13836 / NRRL 3357 / JCM 12722 / SRRC 167), this protein is Probable alpha-L-arabinofuranosidase C (abfC).